The following is a 366-amino-acid chain: NADH-quinone oxidoreductase subunit D (366 aa).

This sequence belongs to the complex I 49 kDa subunit family. As to quaternary structure, NDH-1 is composed of 14 different subunits. Subunits NuoB, C, D, E, F, and G constitute the peripheral sector of the complex.

It is found in the cell membrane. The enzyme catalyses a quinone + NADH + 5 H(+)(in) = a quinol + NAD(+) + 4 H(+)(out). Its function is as follows. NDH-1 shuttles electrons from NADH, via FMN and iron-sulfur (Fe-S) centers, to quinones in the respiratory chain. The immediate electron acceptor for the enzyme in this species is believed to be a menaquinone. Couples the redox reaction to proton translocation (for every two electrons transferred, four hydrogen ions are translocated across the cytoplasmic membrane), and thus conserves the redox energy in a proton gradient. The protein is NADH-quinone oxidoreductase subunit D of Bacillus cereus (strain ATCC 10987 / NRS 248).